The sequence spans 455 residues: Transcriptional regulatory protein FlbD (455 aa).

Residues R2–T114 enclose the Response regulatory domain. Residues M120–L349 form the Sigma-54 factor interaction domain. ATP contacts are provided by residues G148–E155 and A211–E220. The segment at residues R416 to K435 is a DNA-binding region (H-T-H motif).

It is found in the cytoplasm. Activation of sigma-54-dependent flagellar gene promoters and strong negative autoregulatory effects on its own promoter. The synthesis and function of FlbD in C.crescentus is controlled by an internal cell-cycle clock. The protein is Transcriptional regulatory protein FlbD (flbD) of Caulobacter vibrioides (strain ATCC 19089 / CIP 103742 / CB 15) (Caulobacter crescentus).